We begin with the raw amino-acid sequence, 215 residues long: Peroxiredoxin-5, mitochondrial (215 aa).

The N-terminal 53 residues, 1 to 53 (MGLAGVCVLRRSAGYILGGAAGQSVAATAAARRRSEGGWASGGVRSFSRAAAA), are a transit peptide targeting the mitochondrion. Residues 57 to 215 (IKVGDAIPAV…SLAPSIISQL (159 aa)) enclose the Thioredoxin domain. At Lys76 the chain carries N6-acetyllysine. Lys84 is modified (N6-acetyllysine; alternate). The residue at position 84 (Lys84) is an N6-succinyllysine; alternate. Catalysis depends on Cys101, which acts as the Cysteine sulfenic acid (-SOH) intermediate. Residue Cys101 is the site of S-palmitoyl cysteine attachment. Cysteines 101 and 205 form a disulfide. An N6-succinyllysine modification is found at Lys117. A phosphoserine mark is found at Ser172 and Ser183. Positions 213–215 (SQL) match the Microbody targeting signal motif.

Belongs to the peroxiredoxin family. Prx5 subfamily. In terms of assembly, monomer. In terms of processing, S-palmitoylated. Palmitoylation occurs on the active site, inhibiting its reactivity; therefore PRDX5 palmitoylation status determines its antioxidant capacity. S-palmitoylated. Depalmitoylated by ABHD10.

The protein resides in the mitochondrion. Its subcellular location is the cytoplasm. It localises to the peroxisome matrix. The catalysed reaction is a hydroperoxide + [thioredoxin]-dithiol = an alcohol + [thioredoxin]-disulfide + H2O. Its function is as follows. Thiol-specific peroxidase that catalyzes the reduction of hydrogen peroxide and organic hydroperoxides to water and alcohols, respectively. Plays a role in cell protection against oxidative stress by detoxifying peroxides and as sensor of hydrogen peroxide-mediated signaling events. In Papio hamadryas (Hamadryas baboon), this protein is Peroxiredoxin-5, mitochondrial (PRDX5).